Consider the following 69-residue polypeptide: DNA gyrase inhibitor YacG (69 aa).

Cys13, Cys16, Cys32, and Cys36 together coordinate Zn(2+).

Belongs to the DNA gyrase inhibitor YacG family. Interacts with GyrB. Requires Zn(2+) as cofactor.

In terms of biological role, inhibits all the catalytic activities of DNA gyrase by preventing its interaction with DNA. Acts by binding directly to the C-terminal domain of GyrB, which probably disrupts DNA binding by the gyrase. This is DNA gyrase inhibitor YacG from Neisseria gonorrhoeae (strain ATCC 700825 / FA 1090).